Consider the following 445-residue polypeptide: Maltoporin 2 (445 aa).

An N-terminal signal peptide occupies residues 1–25 (MKMKAKWLPIAAAVTAALASQAAFA).

Belongs to the porin LamB (TC 1.B.3) family. Homotrimer formed of three 18-stranded antiparallel beta-barrels, containing three independent channels.

The protein resides in the cell outer membrane. The catalysed reaction is beta-maltose(in) = beta-maltose(out). Its function is as follows. Involved in the transport of maltose and maltodextrins. The sequence is that of Maltoporin 2 from Aeromonas salmonicida (strain A449).